A 286-amino-acid polypeptide reads, in one-letter code: Putative sugar uptake protein lmo0176 (286 aa).

The next 8 membrane-spanning stretches (helical) occupy residues 4-26, 33-55, 114-136, 149-167, 177-194, 207-226, 230-252, and 264-283; these read MIAL…FGGS, GMTL…VYTL, LRII…TSYA, GLIT…VVLI, AILP…IMTH, LLLT…MVHA, VGVA…GGII, and LFVI…IGVA.

Belongs to the GRP transporter (TC 2.A.7.5) family.

It localises to the cell membrane. The protein is Putative sugar uptake protein lmo0176 of Listeria monocytogenes serovar 1/2a (strain ATCC BAA-679 / EGD-e).